We begin with the raw amino-acid sequence, 174 residues long: FITAAFGIPQISTGDMLRAAIKAGTPLGLEAKKIIDEGGLVRDDIIIGMVKERIAQDDCKNGFLFDGFPRTLAQAEAMVEAGVDLDAVVEIDVPDSVIVDRMSGRRVHLASGRTYHIAYNPPKVEGKDDVTGEDLIQRDDDKEETVKKRLDVYHGQTEVLVGFYSKLTGEHAPK.

Residues 12 to 41 (STGDMLRAAIKAGTPLGLEAKKIIDEGGLV) form an NMP region. AMP contacts are provided by residues Thr-13, Arg-18, 39–41 (GLV), 67–70 (GFPR), and Gln-74. The tract at residues 104–141 (GRRVHLASGRTYHIAYNPPKVEGKDDVTGEDLIQRDDD) is LID. Residues Arg-105 and 114 to 115 (TY) contribute to the ATP site. Positions 138 and 149 each coordinate AMP.

The protein belongs to the adenylate kinase family. As to quaternary structure, monomer.

It localises to the cytoplasm. The enzyme catalyses AMP + ATP = 2 ADP. It functions in the pathway purine metabolism; AMP biosynthesis via salvage pathway; AMP from ADP: step 1/1. Functionally, catalyzes the reversible transfer of the terminal phosphate group between ATP and AMP. Plays an important role in cellular energy homeostasis and in adenine nucleotide metabolism. In Neisseria animalis, this protein is Adenylate kinase.